The chain runs to 932 residues: Protocadherin gamma-A8 (932 aa).

A signal peptide spans M1–G29. Cadherin domains are found at residues Q30–F133, Q134–F242, P243–V347, I348–F452, P453–I562, and D570–V682. Topologically, residues Q30–Y692 are extracellular. N-linked (GlcNAc...) asparagine glycosylation occurs at N47. 3 N-linked (GlcNAc...) asparagine glycosylation sites follow: N414, N419, and N545. An N-linked (GlcNAc...) asparagine glycan is attached at N685. A helical membrane pass occupies residues L693–G713. Residues L714–K932 are Cytoplasmic-facing. Disordered stretches follow at residues A804–N841 and A902–K932. Residues A810–N841 show a composition bias toward polar residues. Positions N922–K932 are enriched in basic residues.

The protein localises to the cell membrane. Its function is as follows. Potential calcium-dependent cell-adhesion protein. May be involved in the establishment and maintenance of specific neuronal connections in the brain. The sequence is that of Protocadherin gamma-A8 (PCDHGA8) from Pan troglodytes (Chimpanzee).